The following is a 111-amino-acid chain: NADH-ubiquinone oxidoreductase chain 3 (111 aa).

The next 3 membrane-spanning stretches (helical) occupy residues 2 to 22 (ILIW…GMFV), 54 to 74 (FFVI…LLPM), and 82 to 102 (PTTY…FYEW).

This sequence belongs to the complex I subunit 3 family.

The protein localises to the mitochondrion membrane. The catalysed reaction is a ubiquinone + NADH + 5 H(+)(in) = a ubiquinol + NAD(+) + 4 H(+)(out). In terms of biological role, core subunit of the mitochondrial membrane respiratory chain NADH dehydrogenase (Complex I) that is believed to belong to the minimal assembly required for catalysis. Complex I functions in the transfer of electrons from NADH to the respiratory chain. The immediate electron acceptor for the enzyme is believed to be ubiquinone. The sequence is that of NADH-ubiquinone oxidoreductase chain 3 (ND3) from Artemia franciscana (Brine shrimp).